Reading from the N-terminus, the 338-residue chain is Glycerol-3-phosphate dehydrogenase [NAD(P)+] (338 aa).

NADPH contacts are provided by S13, W14, and K108. Residues K108, G139, and S141 each coordinate sn-glycerol 3-phosphate. NADPH is bound at residue A143. K194, D247, S257, R258, and N259 together coordinate sn-glycerol 3-phosphate. K194 serves as the catalytic Proton acceptor. R258 serves as a coordination point for NADPH. 2 residues coordinate NADPH: V282 and E284.

Belongs to the NAD-dependent glycerol-3-phosphate dehydrogenase family.

The protein resides in the cytoplasm. It carries out the reaction sn-glycerol 3-phosphate + NAD(+) = dihydroxyacetone phosphate + NADH + H(+). The enzyme catalyses sn-glycerol 3-phosphate + NADP(+) = dihydroxyacetone phosphate + NADPH + H(+). The protein operates within membrane lipid metabolism; glycerophospholipid metabolism. Its function is as follows. Catalyzes the reduction of the glycolytic intermediate dihydroxyacetone phosphate (DHAP) to sn-glycerol 3-phosphate (G3P), the key precursor for phospholipid synthesis. The sequence is that of Glycerol-3-phosphate dehydrogenase [NAD(P)+] from Streptococcus pyogenes serotype M12 (strain MGAS9429).